A 292-amino-acid chain; its full sequence is MNNYTIKDITRASGGFAMLAVDQREAMRLMFAAAGAKTPVADSVLTDFKVNAAKILSPYASAVLLDQQFCYRQAVEQNAVAKSCAMIVAADDFIPGNGIPVDNVVIDKKINAQAVKRDGAKALKLLVLWRSDEDAQQRLDMVKEFNELCHSNGLLSIIEPVVRPPRCGDKFDREQAIIDAAKELGDSGADLYKVEMPLYGKGARSDLLTASQRLNGHINMPWVILSSGVDEKLFPRAVRVAMEAGASGFLAGRAVWSSVIGLPDTELMLRDVSAPKLQRLGEIVDEMMAKRR.

Lys-193 (schiff-base intermediate with substrate) is an active-site residue.

It belongs to the aldolase LacD family. Homotetramer.

The catalysed reaction is 6-deoxy-6-sulfo-D-fructose 1-phosphate = (2S)-3-sulfolactaldehyde + dihydroxyacetone phosphate. In terms of biological role, cleaves 6-deoxy-6-sulfo-D-fructose 1-phosphate (SFP) to form dihydroxyacetone phosphate (DHAP) and 3-sulfolactaldehyde (SLA). This chain is Sulfofructosephosphate aldolase (yihT), found in Salmonella typhi.